A 481-amino-acid chain; its full sequence is Hyaluronidase-4 (481 aa).

Topologically, residues 1-11 are cytoplasmic; that stretch reads MQLLPEGQLRL. Residues 12–32 traverse the membrane as a helical segment; that stretch reads CVFQPVHLTSGLLILFILKSI. Topologically, residues 33-455 are extracellular; it reads SSLKPARLPV…CREMTEASGP (423 aa). 5 cysteine pairs are disulfide-bonded: C59–C351, C223–C237, C376–C387, C381–C435, and C437–C446. N-linked (GlcNAc...) asparagine glycans are attached at residues N64 and N115. E147 serves as the catalytic Proton donor. N232 and N343 each carry an N-linked (GlcNAc...) asparagine glycan. The chain crosses the membrane as a helical span at residues 456-476; the sequence is SGLSLSSSSVITLCLLVLAGY. Residues 477 to 481 lie on the Cytoplasmic side of the membrane; that stretch reads QSIQL.

It belongs to the glycosyl hydrolase 56 family.

The protein resides in the membrane. The enzyme catalyses Random hydrolysis of (1-&gt;4)-linkages between N-acetyl-beta-D-glucosamine and D-glucuronate residues in hyaluronate.. Its function is as follows. Endo-hyaluronidase that degrades hyaluronan to smaller oligosaccharide fragments. Also has chondroitin sulfate hydrolase activity, The best substrate being the galactosaminidic linkage in the sequence of a trisulfated tetrasaccharide. The protein is Hyaluronidase-4 (Hyal4) of Mus musculus (Mouse).